A 260-amino-acid chain; its full sequence is Phytolongin Phyl2.1 (260 aa).

The Longin domain maps to 12 to 114 (CIAKGTVILA…LDNPTQHCLQ (103 aa)). The helical; Anchor for type IV membrane protein transmembrane segment at 231-251 (WIVLMFDLCICLVLFGIWLWI) threads the bilayer.

The protein belongs to the synaptobrevin family.

Its subcellular location is the membrane. Non-SNARE longin protein involved in membrane-trafficking machinery. This is Phytolongin Phyl2.1 from Arabidopsis thaliana (Mouse-ear cress).